We begin with the raw amino-acid sequence, 646 residues long: Sulfate transporter 3.2 (646 aa).

Residues 1-76 (MSSKRASQYH…GYSLEYLKSD (76 aa)) lie on the Cytoplasmic side of the membrane. A helical membrane pass occupies residues 77–97 (VISGITIASLAIPQGISYAQL). Residues 98-99 (AN) lie on the Extracellular side of the membrane. A helical membrane pass occupies residues 100–120 (LPPILGLYSSLVPPLVYAIMG). Residues 121-124 (SSRD) are Cytoplasmic-facing. The helical transmembrane segment at 125–145 (LAVGTVAVASLLTAAMLGKEV) threads the bilayer. At 146 to 154 (NAVVNPKLY) the chain is on the extracellular side. A helical membrane pass occupies residues 155-175 (LHLAFTATFFAGLMQTCLGLL). Position 176 (Arg-176) is a topological domain, cytoplasmic. Residues 177–197 (LGFVVEILSHAAIVGFMGGAA) form a helical membrane-spanning segment. Over 198-235 (TVVCLQQLKGLLGLHHFTHSTDIVTVLRSIFSQSHMWR) the chain is Extracellular. Residues 236-256 (WESGVLGCCFLIFLLTTKYIS) traverse the membrane as a helical segment. At 257–262 (KKRPKL) the chain is on the cytoplasmic side. The helical transmembrane segment at 263 to 283 (FWISAMSPLVSVIFGTIFLYF) threads the bilayer. Residues 284–315 (LHDQFHGIQFIGELKKGINPPSITHLVFTPPY) lie on the Extracellular side of the membrane. The helical transmembrane segment at 316–336 (VMLALKVGIITGVIALAEGIA) threads the bilayer. Topologically, residues 337 to 354 (VGRSFAMYKNYNIDGNKE) are cytoplasmic. A helical membrane pass occupies residues 355-375 (MIAFGMMNILGSFSSCYLTTG). The Extracellular segment spans residues 376–390 (PFSRSAVNYNAGCKT). Transmembrane regions (helical) follow at residues 391-411 (ALSN…LTPL) and 412-432 (FFYT…LGLV). Topologically, residues 433–447 (DYEAAIHLWKLDKFD) are extracellular. Residues 448–468 (FFVCLSAYLGVVFGTIEIGLI) traverse the membrane as a helical segment. Over 469–646 (LSVGISVMRL…DSPVPEFNNV (178 aa)) the chain is Cytoplasmic. The STAS domain maps to 504-627 (HYPQAITRSS…LTVAEAVAAC (124 aa)).

This sequence belongs to the SLC26A/SulP transporter (TC 2.A.53) family. As to expression, expressed only in leaves.

It is found in the membrane. Functionally, h(+)/sulfate cotransporter that may play a role in the regulation of sulfate assimilation. This is Sulfate transporter 3.2 (SULTR3;2) from Arabidopsis thaliana (Mouse-ear cress).